Reading from the N-terminus, the 101-residue chain is Small ribosomal subunit protein uS10 (101 aa).

It belongs to the universal ribosomal protein uS10 family. As to quaternary structure, part of the 30S ribosomal subunit.

Its function is as follows. Involved in the binding of tRNA to the ribosomes. The sequence is that of Small ribosomal subunit protein uS10 from Christiangramia forsetii (strain DSM 17595 / CGMCC 1.15422 / KT0803) (Gramella forsetii).